The primary structure comprises 302 residues: Chloramphenicol resistance protein (302 aa).

The protein localises to the cell membrane. Its function is as follows. This protein is thought to be a membrane-associated barrier of drug uptake. This is Chloramphenicol resistance protein (cml) from Escherichia coli.